Here is a 217-residue protein sequence, read N- to C-terminus: 3,4-dihydroxy-2-butanone 4-phosphate synthase (217 aa).

Residues 37 to 38, Asp-42, 150 to 154, and Glu-174 each bind D-ribulose 5-phosphate; these read RE and RRGHT. A Mg(2+)-binding site is contributed by Glu-38. His-153 contributes to the Mg(2+) binding site.

It belongs to the DHBP synthase family. As to quaternary structure, homodimer. It depends on Mg(2+) as a cofactor. The cofactor is Mn(2+).

It catalyses the reaction D-ribulose 5-phosphate = (2S)-2-hydroxy-3-oxobutyl phosphate + formate + H(+). It functions in the pathway cofactor biosynthesis; riboflavin biosynthesis; 2-hydroxy-3-oxobutyl phosphate from D-ribulose 5-phosphate: step 1/1. Its function is as follows. Catalyzes the conversion of D-ribulose 5-phosphate to formate and 3,4-dihydroxy-2-butanone 4-phosphate. The polypeptide is 3,4-dihydroxy-2-butanone 4-phosphate synthase (Shewanella woodyi (strain ATCC 51908 / MS32)).